We begin with the raw amino-acid sequence, 107 residues long: UPF0235 protein RPC_0058 (107 aa).

The protein belongs to the UPF0235 family.

The sequence is that of UPF0235 protein RPC_0058 from Rhodopseudomonas palustris (strain BisB18).